The chain runs to 159 residues: Ribosomal RNA large subunit methyltransferase H (159 aa).

S-adenosyl-L-methionine contacts are provided by residues leucine 76, glycine 108, and 127 to 132 (MSKMTF).

The protein belongs to the RNA methyltransferase RlmH family. Homodimer.

The protein resides in the cytoplasm. The enzyme catalyses pseudouridine(1915) in 23S rRNA + S-adenosyl-L-methionine = N(3)-methylpseudouridine(1915) in 23S rRNA + S-adenosyl-L-homocysteine + H(+). Functionally, specifically methylates the pseudouridine at position 1915 (m3Psi1915) in 23S rRNA. The protein is Ribosomal RNA large subunit methyltransferase H of Ureaplasma parvum serovar 3 (strain ATCC 27815 / 27 / NCTC 11736).